The chain runs to 122 residues: Large ribosomal subunit protein uL14 (122 aa).

This sequence belongs to the universal ribosomal protein uL14 family. In terms of assembly, part of the 50S ribosomal subunit. Forms a cluster with proteins L3 and L19. In the 70S ribosome, L14 and L19 interact and together make contacts with the 16S rRNA in bridges B5 and B8.

In terms of biological role, binds to 23S rRNA. Forms part of two intersubunit bridges in the 70S ribosome. The protein is Large ribosomal subunit protein uL14 of Thermosipho africanus (strain TCF52B).